The following is a 213-amino-acid chain: Thymidylate kinase (213 aa).

10-17 (GLEGAGKT) provides a ligand contact to ATP.

This sequence belongs to the thymidylate kinase family.

It catalyses the reaction dTMP + ATP = dTDP + ADP. Its function is as follows. Phosphorylation of dTMP to form dTDP in both de novo and salvage pathways of dTTP synthesis. The sequence is that of Thymidylate kinase from Klebsiella pneumoniae subsp. pneumoniae (strain ATCC 700721 / MGH 78578).